Consider the following 186-residue polypeptide: Ribosome-recycling factor (186 aa).

The tract at residues 135-164 (DGMDDLKKAEKDGEIGQDESRAQSERVQKM) is disordered.

It belongs to the RRF family.

It is found in the cytoplasm. Functionally, responsible for the release of ribosomes from messenger RNA at the termination of protein biosynthesis. May increase the efficiency of translation by recycling ribosomes from one round of translation to another. The chain is Ribosome-recycling factor from Rhizobium meliloti (strain 1021) (Ensifer meliloti).